Reading from the N-terminus, the 456-residue chain is Toxin CfTX-1 (456 aa).

An N-terminal signal peptide occupies residues 1–20; it reads MVKMLFFAFLPLLFMTGIAA.

Belongs to the jellyfish toxin family. Type I subfamily. Oligomer. In terms of processing, contains disulfide bonds. As to expression, nematocytes.

It localises to the secreted. It is found in the nematocyst. The protein resides in the target cell membrane. Its function is as follows. May cause profound effects on the cardiovascular system of anesthetized rats (at 25 ug/kg), since the fraction containing this toxin and CfTX-2 produces an initial increase in mean arterial pressure, followed by cardiovascular collapse in all animals within 1 minute of injection. To note, the same fraction does not induce significant change in heart rate. Has weak hemolytic activity. Is lethal to crayfish. Causes cutaneous inflammation in humans. May act as a pore-forming toxin, disrupting normal transmembrane ion concentration gradients in susceptible cells. The protein is Toxin CfTX-1 of Chironex fleckeri (Australian box jellyfish).